We begin with the raw amino-acid sequence, 510 residues long: 2,3-bisphosphoglycerate-independent phosphoglycerate mutase (510 aa).

2 residues coordinate Mn(2+): aspartate 12 and serine 62. The active-site Phosphoserine intermediate is the serine 62. Substrate-binding positions include histidine 123, 152–153 (RD), arginine 184, arginine 190, 257–260 (RADR), and lysine 331. Mn(2+) contacts are provided by aspartate 399, histidine 403, aspartate 440, histidine 441, and histidine 458.

The protein belongs to the BPG-independent phosphoglycerate mutase family. In terms of assembly, monomer. Mn(2+) is required as a cofactor.

It catalyses the reaction (2R)-2-phosphoglycerate = (2R)-3-phosphoglycerate. It functions in the pathway carbohydrate degradation; glycolysis; pyruvate from D-glyceraldehyde 3-phosphate: step 3/5. Functionally, catalyzes the interconversion of 2-phosphoglycerate and 3-phosphoglycerate. This chain is 2,3-bisphosphoglycerate-independent phosphoglycerate mutase, found in Lawsonia intracellularis (strain PHE/MN1-00).